Consider the following 604-residue polypeptide: ATPase family AAA domain-containing protein 3A homolog (604 aa).

A disordered region spans residues 1–50 (MSWLLGRNRQQPQPDQTAGFSEGGGAADPEGRTAGEKSGDSQLSRAERKA). Polar residues predominate over residues 8–19 (NRQQPQPDQTAG). Residues 29-50 (PEGRTAGEKSGDSQLSRAERKA) are compositionally biased toward basic and acidic residues. Residues 62–221 (ERAADAAKTL…INLEKIRLKA (160 aa)) are a coiled coil. 358–365 (GPPGTGKT) contacts ATP.

In terms of assembly, can form homooligomers.

The protein localises to the mitochondrion inner membrane. Its subcellular location is the mitochondrion matrix. It localises to the mitochondrion nucleoid. Its function is as follows. Required to maintain the proper number of mitochondria in neurons and muscles. In Drosophila melanogaster (Fruit fly), this protein is ATPase family AAA domain-containing protein 3A homolog.